The primary structure comprises 260 residues: UPF0246 protein Bmul_1054/BMULJ_02209 (260 aa).

Belongs to the UPF0246 family.

In Burkholderia multivorans (strain ATCC 17616 / 249), this protein is UPF0246 protein Bmul_1054/BMULJ_02209.